Here is a 550-residue protein sequence, read N- to C-terminus: Membrane-bound alkaline phosphatase (550 aa).

An N-terminal signal peptide occupies residues 1 to 39 (MSTWWLVVVAAAAAAGLVRAEDRYHPERLAAGEASAATR). Aspartate 83 serves as a coordination point for Mg(2+). Aspartate 83 contributes to the Zn(2+) binding site. The Phosphoserine intermediate role is filled by serine 133. 3 residues coordinate Mg(2+): histidine 196, serine 198, and glutamate 356. 5 residues coordinate Zn(2+): aspartate 361, histidine 365, aspartate 402, histidine 403, and histidine 479. The GPI-anchor amidated serine moiety is linked to residue serine 524. Positions 525–550 (AATVPTAALLSLLLAAFITLRHQCFL) are cleaved as a propeptide — removed in mature form.

It belongs to the alkaline phosphatase family. Mg(2+) is required as a cofactor. Requires Zn(2+) as cofactor. As to expression, midgut.

Its subcellular location is the cell membrane. The catalysed reaction is a phosphate monoester + H2O = an alcohol + phosphate. The chain is Membrane-bound alkaline phosphatase (Alp-m) from Bombyx mori (Silk moth).